The chain runs to 162 residues: MSDSLPTLSHLDDSGQVRMVDVGDKADADRLAIARAAVRMSPQAYGLLTQPGQGKGEVLNTARVAGVLAAKRCAELIPLCHSLPLAFVGIEFSLDDEGHRVEIRATCRTRYKTGVEMEAMTACSMAALTIYDMCKAADKGIVIEQVRLAYKSGGKSGEWRND.

Residues 79 to 81 and 117 to 118 contribute to the substrate site; these read LCH and ME. D132 is an active-site residue.

This sequence belongs to the MoaC family. In terms of assembly, homohexamer; trimer of dimers.

It carries out the reaction (8S)-3',8-cyclo-7,8-dihydroguanosine 5'-triphosphate = cyclic pyranopterin phosphate + diphosphate. It participates in cofactor biosynthesis; molybdopterin biosynthesis. In terms of biological role, catalyzes the conversion of (8S)-3',8-cyclo-7,8-dihydroguanosine 5'-triphosphate to cyclic pyranopterin monophosphate (cPMP). The protein is Cyclic pyranopterin monophosphate synthase of Bordetella avium (strain 197N).